The primary structure comprises 177 residues: Probable chemoreceptor glutamine deamidase CheD (177 aa).

It belongs to the CheD family.

It carries out the reaction L-glutaminyl-[protein] + H2O = L-glutamyl-[protein] + NH4(+). In terms of biological role, probably deamidates glutamine residues to glutamate on methyl-accepting chemotaxis receptors (MCPs), playing an important role in chemotaxis. The sequence is that of Probable chemoreceptor glutamine deamidase CheD from Pseudomonas fluorescens (strain SBW25).